Reading from the N-terminus, the 415-residue chain is 3-isopropylmalate dehydratase large subunit (415 aa).

[4Fe-4S] cluster-binding residues include C297, C355, and C358.

The protein belongs to the aconitase/IPM isomerase family. LeuC type 2 subfamily. Heterodimer of LeuC and LeuD. The cofactor is [4Fe-4S] cluster.

The catalysed reaction is (2R,3S)-3-isopropylmalate = (2S)-2-isopropylmalate. It participates in amino-acid biosynthesis; L-leucine biosynthesis; L-leucine from 3-methyl-2-oxobutanoate: step 2/4. Functionally, catalyzes the isomerization between 2-isopropylmalate and 3-isopropylmalate, via the formation of 2-isopropylmaleate. The protein is 3-isopropylmalate dehydratase large subunit of Metallosphaera sedula (strain ATCC 51363 / DSM 5348 / JCM 9185 / NBRC 15509 / TH2).